The primary structure comprises 307 residues: Protoheme IX farnesyltransferase (307 aa).

Transmembrane regions (helical) follow at residues 29–49 (VISLLLWTTLTAMFMAARGWP), 51–71 (LGLLVVVSLAGYMSAGSAGVF), 101–120 (AAIFGGALQVLSFGMLWVWA), 124–143 (AAWMSLAGFLTYVVVYTLWL), 151–171 (IVLGGAAGCFPPLVGWAAVTG), 179–199 (FLFAIIFFWTPVHFWALALMI), 218–238 (RLTVAQIGLYAIYTVVLSVMP), 239–259 (VFLGEVGWLYFLSALVLGWLL), and 280–300 (VAVPLYLYSMLYLALLFVAGA).

This sequence belongs to the UbiA prenyltransferase family. Protoheme IX farnesyltransferase subfamily.

The protein localises to the cell membrane. It catalyses the reaction heme b + (2E,6E)-farnesyl diphosphate + H2O = Fe(II)-heme o + diphosphate. It participates in porphyrin-containing compound metabolism; heme O biosynthesis; heme O from protoheme: step 1/1. In terms of biological role, converts heme B (protoheme IX) to heme O by substitution of the vinyl group on carbon 2 of heme B porphyrin ring with a hydroxyethyl farnesyl side group. This chain is Protoheme IX farnesyltransferase, found in Deinococcus geothermalis (strain DSM 11300 / CIP 105573 / AG-3a).